The following is a 157-amino-acid chain: Protein-export protein SecB (157 aa).

This sequence belongs to the SecB family. Homotetramer, a dimer of dimers. One homotetramer interacts with 1 SecA dimer.

The protein resides in the cytoplasm. In terms of biological role, one of the proteins required for the normal export of preproteins out of the cell cytoplasm. It is a molecular chaperone that binds to a subset of precursor proteins, maintaining them in a translocation-competent state. It also specifically binds to its receptor SecA. The chain is Protein-export protein SecB from Magnetococcus marinus (strain ATCC BAA-1437 / JCM 17883 / MC-1).